We begin with the raw amino-acid sequence, 239 residues long: Ribosomal RNA small subunit methyltransferase G (239 aa).

Residues Gly77, Phe82, 128-129, and Arg147 contribute to the S-adenosyl-L-methionine site; that span reads AE.

It belongs to the methyltransferase superfamily. RNA methyltransferase RsmG family.

Its subcellular location is the cytoplasm. In terms of biological role, specifically methylates the N7 position of guanine in position 535 of 16S rRNA. The polypeptide is Ribosomal RNA small subunit methyltransferase G (Bacillus cereus (strain ZK / E33L)).